Reading from the N-terminus, the 555-residue chain is Dynein regulatory complex protein 11 (555 aa).

IQ domains follow at residues 154–183 (EDEAILMIQKNERGRQARERARLAAITKRQ) and 199–226 (HEEAARKIQAAIRGFLWRRRIKKEADKE). Disordered stretches follow at residues 232–255 (MKPKPRDPKRDPQMGEAKNLMRRK), 299–377 (KRNP…EQKI), 450–469 (AAKLGKKGKKKKGKKKEPFS), and 501–555 (AKKD…SCGA). 2 stretches are compositionally biased toward basic and acidic residues: residues 235-244 (KPRDPKRDPQ) and 338-367 (GDGKGKGKDGKGDAKKDAKKDPKKDKKGGG). Positions 452–464 (KLGKKGKKKKGKK) are enriched in basic residues. Basic and acidic residues predominate over residues 501–521 (AKKDEKDAAGDGKGKGKDGKG). A compositionally biased stretch (basic residues) spans 537–546 (KKKKGGKKKS).

It belongs to the AAA ATPase family. DRC11 subfamily. As to quaternary structure, component of the nexin-dynein regulatory complex (N-DRC). Interacts with DRC5.

The protein localises to the cytoplasm. It localises to the cytoskeleton. The protein resides in the flagellum axoneme. Component of the nexin-dynein regulatory complex (N-DRC), a key regulator of ciliary/flagellar motility which maintains the alignment and integrity of the distal axoneme and regulates microtubule sliding in motile axonemes. The chain is Dynein regulatory complex protein 11 from Chlamydomonas reinhardtii (Chlamydomonas smithii).